Here is a 462-residue protein sequence, read N- to C-terminus: Gastric inhibitory polypeptide receptor (462 aa).

Residues 1-18 (MPLRPRLLLLCLWGLLLQ) form the signal peptide. Residues 19–135 (QAETDSEGQT…DQRLILERLQ (117 aa)) are Extracellular-facing. Intrachain disulfides connect C43-C67, C58-C100, and C81-C115. N59 and N74 each carry an N-linked (GlcNAc...) asparagine glycan. A helical transmembrane segment spans residues 136-158 (VVYTVGYSLSLGTLLLALLILSL). The Cytoplasmic portion of the chain corresponds to 159–166 (FRRLHCTR). The chain crosses the membrane as a helical span at residues 167–186 (NYIHMNVFLSFMLRAVAILT). The Extracellular portion of the chain corresponds to 187-214 (RDRLLPTLGPYPGDRTLTLRNQALAACR). The chain crosses the membrane as a helical span at residues 215-239 (TAQIVTQYCVGANYTWLLVEGVYLH). Topologically, residues 240-251 (HLLVIVGGSEKG) are cytoplasmic. A helical membrane pass occupies residues 252-275 (HFRCYLLLGWGAPALFVIPWVIVR). Over 276–290 (YLLENTQCWERNEVK) the chain is Extracellular. Residues 291–316 (AIWWIIRTPILITILINFFIFIRILG) form a helical membrane-spanning segment. Topologically, residues 317 to 338 (ILVSKLRTRQMRCPDYRLRLAR) are cytoplasmic. A helical transmembrane segment spans residues 339–359 (STLTLVPLLGVHEVVFAPVTE). At 360 to 374 (EQAEGTLRFAKLAFE) the chain is on the extracellular side. Residues 375 to 395 (IFLSSFQGFLVSVLYCFINKE) traverse the membrane as a helical segment. The Cytoplasmic segment spans residues 396-462 (VQSEIRRSWR…PGEEVLESYC (67 aa)). Residues 421-462 (HAELGPQALPSRSAPREVPITGSTLPSGPLHGPGEEVLESYC) are disordered.

Belongs to the G-protein coupled receptor 2 family. May form homodimers and heterodimers with GLP1R. N-glycosylation is required for cell surface expression and lengthens receptor half-life by preventing degradation in the ER. Widely distributed including pancreatic islets, brain and various peripheral tissues.

It is found in the cell membrane. In terms of biological role, this is a receptor for GIP. The activity of this receptor is mediated by G proteins which activate adenylyl cyclase. This is Gastric inhibitory polypeptide receptor (GIPR) from Mesocricetus auratus (Golden hamster).